A 357-amino-acid polypeptide reads, in one-letter code: A-type ATP synthase subunit C (357 aa).

It belongs to the V-ATPase V0D/AC39 subunit family. Has multiple subunits with at least A(3), B(3), C, D, E, F, H, I and proteolipid K(x).

The protein resides in the cell membrane. Component of the A-type ATP synthase that produces ATP from ADP in the presence of a proton gradient across the membrane. In Methanococcoides burtonii (strain DSM 6242 / NBRC 107633 / OCM 468 / ACE-M), this protein is A-type ATP synthase subunit C.